The following is a 127-amino-acid chain: Large ribosomal subunit protein bL17 (127 aa).

The protein belongs to the bacterial ribosomal protein bL17 family. As to quaternary structure, part of the 50S ribosomal subunit. Contacts protein L32.

This is Large ribosomal subunit protein bL17 from Stenotrophomonas maltophilia (strain K279a).